Consider the following 697-residue polypeptide: Probable glutamine--tRNA ligase (697 aa).

The short motif at 204 to 214 (PEPNGILHIGH) is the 'HIGH' region element. Residues 205-207 (EPN) and 211-217 (HIGHAKA) contribute to the ATP site. Asp237 and Tyr386 together coordinate L-glutamine. Residues Thr405, 434–435 (RL), and 442–444 (LSK) each bind ATP. Residues 441 to 445 (VLSKR) carry the 'KMSKS' region motif.

Belongs to the class-I aminoacyl-tRNA synthetase family.

It carries out the reaction tRNA(Gln) + L-glutamine + ATP = L-glutaminyl-tRNA(Gln) + AMP + diphosphate. The sequence is that of Probable glutamine--tRNA ligase from Encephalitozoon cuniculi (strain GB-M1) (Microsporidian parasite).